The sequence spans 605 residues: Tegument protein UL47 homolog (605 aa).

Residues 1–75 (MATDNARPRS…DPWKLEPAND (75 aa)) are disordered. The segment covering 8–17 (PRSRSLRRKS) has biased composition (basic residues). Positions 54-69 (GADRDPGTRRGIDPWK) are enriched in basic and acidic residues.

This sequence belongs to the alphaherpesvirinae HHV-1 UL47 family. Interacts with US3 kinase. Interacts with UL31 and UL34; these interactions seem important for efficient virion nuclear egress. Interacts with UL41/VHS. Post-translationally, phosphorylated by US3. This phosphorylation is required for proper nuclear localization.

It is found in the virion tegument. The protein resides in the host nucleus. Its subcellular location is the host cytoplasm. Its function is as follows. Tegument protein that can bind to various RNA transcripts. Plays a role in the attenuation of selective viral and cellular mRNA degradation by modulating the activity of host shutoff RNase UL41/VHS. Also plays a role in the primary envelopment of virions in the perinuclear space, probably by interacting with two nuclear egress proteins UL31 and UL34. The chain is Tegument protein UL47 homolog (sORF1) from Amazona oratrix (yellow-headed parrot).